The chain runs to 1193 residues: Pyruvate carboxylase (1193 aa).

Residues 41–493 (QFQKILVANR…WTTFIDDTTE (453 aa)) form the Biotin carboxylation domain. Positions 159, 243, and 278 each coordinate ATP. The 198-residue stretch at 163–360 (RQLAIRCNVP…IVAAQIQIAA (198 aa)) folds into the ATP-grasp domain. Residue Arg-335 is part of the active site. The region spanning 579–847 (CLIMDTTWRD…DPGLNSAHVR (269 aa)) is the Pyruvate carboxyltransferase domain. Residues 587-591 (RDAHQ) and Arg-660 each bind substrate. A divalent metal cation is bound at residue Asp-588. A divalent metal cation contacts are provided by Lys-756, His-786, and His-788. At Lys-756 the chain carries N6-carboxylysine. Thr-921 provides a ligand contact to substrate. Residues 1116 to 1191 (KADVGDSSQV…DGQDLVCKIT (76 aa)) form the Biotinyl-binding domain. Lys-1157 carries the post-translational modification N6-biotinyllysine.

Biotin serves as cofactor. Requires Zn(2+) as cofactor.

It localises to the cytoplasm. It carries out the reaction hydrogencarbonate + pyruvate + ATP = oxaloacetate + ADP + phosphate + H(+). The protein operates within carbohydrate biosynthesis; gluconeogenesis. Its function is as follows. Pyruvate carboxylase catalyzes a 2-step reaction, involving the ATP-dependent carboxylation of the covalently attached biotin in the first step and the transfer of the carboxyl group to pyruvate in the second. The sequence is that of Pyruvate carboxylase (pyc) from Aspergillus terreus (strain NIH 2624 / FGSC A1156).